A 426-amino-acid polypeptide reads, in one-letter code: Dihydroorotase (426 aa).

Zn(2+) is bound by residues H58 and H60. Residues 60–62 and N92 contribute to the substrate site; that span reads HLR. D150, H177, and H230 together coordinate Zn(2+). N276 contributes to the substrate binding site. D303 serves as a coordination point for Zn(2+). D303 is a catalytic residue. Substrate is bound by residues H307 and 321–322; that span reads FG.

This sequence belongs to the metallo-dependent hydrolases superfamily. DHOase family. Class I DHOase subfamily. Zn(2+) serves as cofactor.

It catalyses the reaction (S)-dihydroorotate + H2O = N-carbamoyl-L-aspartate + H(+). Its pathway is pyrimidine metabolism; UMP biosynthesis via de novo pathway; (S)-dihydroorotate from bicarbonate: step 3/3. Its function is as follows. Catalyzes the reversible cyclization of carbamoyl aspartate to dihydroorotate. The chain is Dihydroorotase from Listeria monocytogenes serotype 4a (strain HCC23).